We begin with the raw amino-acid sequence, 500 residues long: NAD(P)H-quinone oxidoreductase chain 4, chloroplastic (500 aa).

14 helical membrane passes run 4-24 (FPWLTIIVVFPILTGSLIFLL), 37-57 (LCICILELLLTTYTFCYHFQL), 87-107 (IGPILLTGFITTLATLAAWPV), 111-131 (AQLFHFLMLAMYSGQIGSFSS), 134-154 (LLLFFLMWEFELIPVYLLLSM), 167-187 (FILYTAGGSIFLLIGVLGIGL), 208-228 (ALEVIFYVGFLIAFAVKLPII), 242-262 (HYSTCMLLAGILLKMGAYGLV), 272-292 (AHCLFSPGLIIVGAIQIIYAA), 305-325 (IAYSSISHMGFIIIGIGSLSD), 330-350 (GAILQIISHGFIGAALFFLAG), 386-406 (LALPGLSGFVAELLVFFGIIT), 416-436 (ILIAFLMAIGMILTPIYSLSM), and 462-482 (LFVSISLLLPIIGIGIYPDFV).

This sequence belongs to the complex I subunit 4 family.

Its subcellular location is the plastid. The protein resides in the chloroplast thylakoid membrane. It catalyses the reaction a plastoquinone + NADH + (n+1) H(+)(in) = a plastoquinol + NAD(+) + n H(+)(out). The enzyme catalyses a plastoquinone + NADPH + (n+1) H(+)(in) = a plastoquinol + NADP(+) + n H(+)(out). In Oenothera biennis (German evening primrose), this protein is NAD(P)H-quinone oxidoreductase chain 4, chloroplastic.